Consider the following 542-residue polypeptide: MAKILKFDEDARRALERGVNKLADTVKVTIGPKGRNVVIDKKFGAPTITNDGVTIAREVEVEDPYENLGAQLVKEVATKTNDIAGDGTTTATVLAQALVREGLKNVAAGASPALLKKGIDAAVKAVSEELLATARPIDEKSDIAAVAGLSAQDSQVGELIAEAMDKVGKDGVITVEESNTFGLELDFTEGMAFDKGYLSPYFVTDQERMEAVLEDPYILIHQGKISSIQDLLPLLEKVIQANASKPLLIIAEDVEGEALSTLVVNKIRGTFNAVAVKAPGFGDRRKAMLGDIATLTGGQVIAEEVGLKLDQVGLDVLGTARRVTVTKDDTTIVDGGGSSDEVAGRINQIKAEIENTDSDWDREKLQERLAKLAGGVCVIKVGAATEVELKEKKHRLEDAISATRAAVEEGIVSGGGSALVHAVKVLEGNLGKTGDEATGVAVVRRAAVEPLRWIAENAGLEGYVITSKVAELDKGQGFNAATGEYGDLVKSGVIDPVKVTRSALENAASIASLLLTTETLVVEKPAEEEADAGHGHGHGHSH.

ATP is bound by residues 29 to 32 (TIGP), 86 to 90 (DGTTT), G415, 479 to 481 (NAA), and D495.

This sequence belongs to the chaperonin (HSP60) family. As to quaternary structure, forms a cylinder of 14 subunits composed of two heptameric rings stacked back-to-back. Interacts with the co-chaperonin GroES.

It localises to the cytoplasm. It catalyses the reaction ATP + H2O + a folded polypeptide = ADP + phosphate + an unfolded polypeptide.. Functionally, together with its co-chaperonin GroES, plays an essential role in assisting protein folding. The GroEL-GroES system forms a nano-cage that allows encapsulation of the non-native substrate proteins and provides a physical environment optimized to promote and accelerate protein folding. The chain is Chaperonin GroEL 1 from Streptomyces avermitilis (strain ATCC 31267 / DSM 46492 / JCM 5070 / NBRC 14893 / NCIMB 12804 / NRRL 8165 / MA-4680).